Here is a 249-residue protein sequence, read N- to C-terminus: Vitamin B12 import ATP-binding protein BtuD (249 aa).

Residues 5–233 form the ABC transporter domain; that stretch reads MQLQDVAETT…PNLAQAYGMN (229 aa). 33–40 is an ATP binding site; the sequence is GPNGAGKS.

This sequence belongs to the ABC transporter superfamily. Vitamin B12 importer (TC 3.A.1.13.1) family. As to quaternary structure, the complex is composed of two ATP-binding proteins (BtuD), two transmembrane proteins (BtuC) and a solute-binding protein (BtuF).

Its subcellular location is the cell inner membrane. The enzyme catalyses an R-cob(III)alamin(out) + ATP + H2O = an R-cob(III)alamin(in) + ADP + phosphate + H(+). In terms of biological role, part of the ABC transporter complex BtuCDF involved in vitamin B12 import. Responsible for energy coupling to the transport system. The protein is Vitamin B12 import ATP-binding protein BtuD of Citrobacter koseri (strain ATCC BAA-895 / CDC 4225-83 / SGSC4696).